A 312-amino-acid polypeptide reads, in one-letter code: Ribosomal protein L11 methyltransferase (312 aa).

Residues Thr-162, Gly-183, Asp-205, and Asn-248 each coordinate S-adenosyl-L-methionine.

The protein belongs to the methyltransferase superfamily. PrmA family.

It is found in the cytoplasm. The enzyme catalyses L-lysyl-[protein] + 3 S-adenosyl-L-methionine = N(6),N(6),N(6)-trimethyl-L-lysyl-[protein] + 3 S-adenosyl-L-homocysteine + 3 H(+). Its function is as follows. Methylates ribosomal protein L11. This is Ribosomal protein L11 methyltransferase from Bacillus cytotoxicus (strain DSM 22905 / CIP 110041 / 391-98 / NVH 391-98).